A 166-amino-acid chain; its full sequence is Deglycase PYRAB04690 (166 aa).

The PfpI endopeptidase domain occupies 1 to 166; the sequence is MRVLILSADQ…WMREFVKLLK (166 aa). Residue His101 is part of the active site.

This sequence belongs to the peptidase C56 family. As to quaternary structure, homohexamer formed by a dimer of trimers that assemble into a hollow ring structure.

The protein resides in the cytoplasm. It carries out the reaction N(omega)-(1-hydroxy-2-oxopropyl)-L-arginyl-[protein] + H2O = lactate + L-arginyl-[protein] + H(+). It catalyses the reaction N(6)-(1-hydroxy-2-oxopropyl)-L-lysyl-[protein] + H2O = lactate + L-lysyl-[protein] + H(+). The catalysed reaction is S-(1-hydroxy-2-oxopropyl)-L-cysteinyl-[protein] + H2O = lactate + L-cysteinyl-[protein] + H(+). The enzyme catalyses N(omega)-(1-hydroxy-2-oxoethyl)-L-arginyl-[protein] + H2O = L-arginyl-[protein] + glycolate + H(+). It carries out the reaction N(6)-(1-hydroxy-2-oxoethyl)-L-lysyl-[protein] + H2O = glycolate + L-lysyl-[protein] + H(+). It catalyses the reaction S-(1-hydroxy-2-oxoethyl)-L-cysteinyl-[protein] + H2O = glycolate + L-cysteinyl-[protein] + H(+). Deglycase that catalyzes the deglycation of the Maillard adducts formed between amino groups of proteins and reactive carbonyl groups of glyoxals. Thus, functions as a protein deglycase that repairs methylglyoxal- and glyoxal-glycated proteins, and releases repaired proteins and lactate or glycolate, respectively. Deglycates cysteine, arginine and lysine residues in proteins, and thus reactivates these proteins by reversing glycation by glyoxals. Acts on early glycation intermediates (hemithioacetals and aminocarbinols), preventing the formation of advanced glycation endproducts (AGE) that cause irreversible damage. Also displays proteolytic activity. This Pyrococcus abyssi (strain GE5 / Orsay) protein is Deglycase PYRAB04690.